The chain runs to 499 residues: Apolipoprotein N-acyltransferase (499 aa).

A run of 6 helical transmembrane segments spans residues 17–37 (VLAGIGIAHGGLLWMAPALAL), 38–58 (LWSACRFPVAASLWGFVAVLL), 84–104 (ASIWLFCGAAAAVLVGLWAWL), 131–151 (IWGLAEVLLAGSPLFWIGVGG), 163–183 (LARWFGAGGLATLQLLIGWWL), and 198–218 (RSLLVGLLCLLLAHGFGWSLL). Residues 232–458 (WQPAIPTRSK…EGVGLADLHF (227 aa)) enclose the CN hydrolase domain. Glu-273 (proton acceptor) is an active-site residue. The active site involves Lys-322. The Nucleophile role is filled by Cys-370. The helical transmembrane segment at 474–494 (IGLMLFAVVGLGLSRVRSWLI) threads the bilayer.

This sequence belongs to the CN hydrolase family. Apolipoprotein N-acyltransferase subfamily.

It localises to the cell inner membrane. The enzyme catalyses N-terminal S-1,2-diacyl-sn-glyceryl-L-cysteinyl-[lipoprotein] + a glycerophospholipid = N-acyl-S-1,2-diacyl-sn-glyceryl-L-cysteinyl-[lipoprotein] + a 2-acyl-sn-glycero-3-phospholipid + H(+). Its pathway is protein modification; lipoprotein biosynthesis (N-acyl transfer). Catalyzes the phospholipid dependent N-acylation of the N-terminal cysteine of apolipoprotein, the last step in lipoprotein maturation. The polypeptide is Apolipoprotein N-acyltransferase (Prochlorococcus marinus (strain MIT 9313)).